The primary structure comprises 252 residues: Thiazole synthase (252 aa).

Lys98 acts as the Schiff-base intermediate with DXP in catalysis. 1-deoxy-D-xylulose 5-phosphate-binding positions include Gly159, 185–186 (AG), and 207–208 (AT).

The protein belongs to the ThiG family. In terms of assembly, homotetramer. Forms heterodimers with either ThiH or ThiS.

The protein resides in the cytoplasm. The enzyme catalyses [ThiS sulfur-carrier protein]-C-terminal-Gly-aminoethanethioate + 2-iminoacetate + 1-deoxy-D-xylulose 5-phosphate = [ThiS sulfur-carrier protein]-C-terminal Gly-Gly + 2-[(2R,5Z)-2-carboxy-4-methylthiazol-5(2H)-ylidene]ethyl phosphate + 2 H2O + H(+). Its pathway is cofactor biosynthesis; thiamine diphosphate biosynthesis. Functionally, catalyzes the rearrangement of 1-deoxy-D-xylulose 5-phosphate (DXP) to produce the thiazole phosphate moiety of thiamine. Sulfur is provided by the thiocarboxylate moiety of the carrier protein ThiS. In vitro, sulfur can be provided by H(2)S. The sequence is that of Thiazole synthase from Mycobacterium avium (strain 104).